We begin with the raw amino-acid sequence, 335 residues long: Matrix protein (335 aa).

This sequence belongs to the morbillivirus/respirovirus/rubulavirus M protein family. Homodimer. Dimerization is critical for virion formation. Interacts with host ANP32B.

It localises to the virion. It is found in the host cell membrane. The M protein has a crucial role in virus assembly and interacts with the RNP complex as well as with the viral membrane. Associates with phosphatidylserine (PS) and phosphatidylinositol 4,5-bisphosphate (PIP2) at the plasma membrane. Interaction with PIP2 triggers matrix protein lattice polymerization. Matrix proteins induce host membrane deformation and curvature necessary for virion assembly/budding. The sequence is that of Matrix protein (M) from Measles virus (strain IP-3-Ca) (MeV).